The following is a 173-amino-acid chain: Myeloid-derived growth factor (173 aa).

The N-terminal stretch at 1–31 is a signal peptide; sequence MAAPSGGWNGVGASLWAALLLGAVALRPAEA.

This sequence belongs to the MYDGF family. Expressed in eosinophils (at protein level). Expressed in bone marrow cells. Expressed in synovial tissue. Found in synovial fluid of patients with arthropaties.

It localises to the secreted. It is found in the endoplasmic reticulum-Golgi intermediate compartment. The protein localises to the endoplasmic reticulum. Its subcellular location is the golgi apparatus. Bone marrow-derived monocyte and paracrine-acting protein that promotes cardiac myocyte survival and adaptive angiogenesis for cardiac protection and/or repair after myocardial infarction (MI). Stimulates endothelial cell proliferation through a MAPK1/3-, STAT3- and CCND1-mediated signaling pathway. Inhibits cardiac myocyte apoptosis in a PI3K/AKT-dependent signaling pathway. Involved in endothelial cell proliferation and angiogenesis. The polypeptide is Myeloid-derived growth factor (Homo sapiens (Human)).